The primary structure comprises 166 residues: Cyclic pyranopterin monophosphate synthase (166 aa).

Substrate-binding positions include 75–77 (MCH) and 115–116 (ME). Asp130 is an active-site residue.

Belongs to the MoaC family. As to quaternary structure, homohexamer; trimer of dimers.

It catalyses the reaction (8S)-3',8-cyclo-7,8-dihydroguanosine 5'-triphosphate = cyclic pyranopterin phosphate + diphosphate. Its pathway is cofactor biosynthesis; molybdopterin biosynthesis. Catalyzes the conversion of (8S)-3',8-cyclo-7,8-dihydroguanosine 5'-triphosphate to cyclic pyranopterin monophosphate (cPMP). The chain is Cyclic pyranopterin monophosphate synthase from Shouchella clausii (strain KSM-K16) (Alkalihalobacillus clausii).